Here is a 152-residue protein sequence, read N- to C-terminus: Deoxyuridine 5'-triphosphate nucleotidohydrolase (152 aa).

Substrate is bound by residues 71-73, N84, 88-90, and M98; these read RSG and LID.

The protein belongs to the dUTPase family. The cofactor is Mg(2+).

The enzyme catalyses dUTP + H2O = dUMP + diphosphate + H(+). The protein operates within pyrimidine metabolism; dUMP biosynthesis; dUMP from dCTP (dUTP route): step 2/2. Functionally, this enzyme is involved in nucleotide metabolism: it produces dUMP, the immediate precursor of thymidine nucleotides and it decreases the intracellular concentration of dUTP so that uracil cannot be incorporated into DNA. The sequence is that of Deoxyuridine 5'-triphosphate nucleotidohydrolase from Shewanella loihica (strain ATCC BAA-1088 / PV-4).